The sequence spans 600 residues: Elongation factor 4 (600 aa).

The region spanning 3–185 is the tr-type G domain; the sequence is KYIRNFSIIA…CLIHDIPHPQ (183 aa). GTP-binding positions include 15–20 and 132–135; these read DHGKST and NKID.

The protein belongs to the TRAFAC class translation factor GTPase superfamily. Classic translation factor GTPase family. LepA subfamily.

It is found in the cell inner membrane. The catalysed reaction is GTP + H2O = GDP + phosphate + H(+). Its function is as follows. Required for accurate and efficient protein synthesis under certain stress conditions. May act as a fidelity factor of the translation reaction, by catalyzing a one-codon backward translocation of tRNAs on improperly translocated ribosomes. Back-translocation proceeds from a post-translocation (POST) complex to a pre-translocation (PRE) complex, thus giving elongation factor G a second chance to translocate the tRNAs correctly. Binds to ribosomes in a GTP-dependent manner. This is Elongation factor 4 from Blochmanniella pennsylvanica (strain BPEN).